Consider the following 204-residue polypeptide: Methylthioribulose-1-phosphate dehydratase (204 aa).

Residues His-95 and His-97 each coordinate Zn(2+).

This sequence belongs to the aldolase class II family. MtnB subfamily. Requires Zn(2+) as cofactor.

The catalysed reaction is 5-(methylsulfanyl)-D-ribulose 1-phosphate = 5-methylsulfanyl-2,3-dioxopentyl phosphate + H2O. It functions in the pathway amino-acid biosynthesis; L-methionine biosynthesis via salvage pathway; L-methionine from S-methyl-5-thio-alpha-D-ribose 1-phosphate: step 2/6. Its function is as follows. Catalyzes the dehydration of methylthioribulose-1-phosphate (MTRu-1-P) into 2,3-diketo-5-methylthiopentyl-1-phosphate (DK-MTP-1-P). This chain is Methylthioribulose-1-phosphate dehydratase, found in Parvibaculum lavamentivorans (strain DS-1 / DSM 13023 / NCIMB 13966).